We begin with the raw amino-acid sequence, 66 residues long: Large ribosomal subunit protein bL35 (66 aa).

It belongs to the bacterial ribosomal protein bL35 family. In terms of assembly, part of the 50S ribosomal subunit. Contacts proteins L15 and L33.

Functionally, binds the 23S rRNA. The sequence is that of Large ribosomal subunit protein bL35 (rpmI) from Deinococcus radiodurans (strain ATCC 13939 / DSM 20539 / JCM 16871 / CCUG 27074 / LMG 4051 / NBRC 15346 / NCIMB 9279 / VKM B-1422 / R1).